Here is a 427-residue protein sequence, read N- to C-terminus: MDKIVVQGGDNRLVGSVTIEGAKNAVLPLLAATILASEGKTVLQNVPILSDVFIMNQVVGGLNAKVDFDEEAHLVKVDATGDITEEAPYKYVSKMRASIVVLGPILARVGHAKVSMPGGCTIGSRPIDLHLKGLEAMGVKISQTAGYIEAKAERLHGAHIYMDFPSVGATQNLMMAATLADGVTVIENAAREPEIVDLAILLNEMGAKVKGAGTETITITGVEKLHGTTHNVVQDRIEAGTFMVAAAMTGGDVLIRDAVWEHNRPLIAKLLEMGVEVIEEDEGIRVRSQLENLKAVHVKTLPHPGFPTDMQAQFTALMTVAKGESTMVETVFENRFQHLEEMRRMGLHSEIIRDTARIVGGQPLQGAEVLSTDLRASAALILTGLVAQGETVVGKLVHLDRGYYGFHEKLAQLGAKIQRIEANDEDE.

23–24 (KN) lines the phosphoenolpyruvate pocket. UDP-N-acetyl-alpha-D-glucosamine is bound at residue R96. The active-site Proton donor is the C120. C120 is modified (2-(S-cysteinyl)pyruvic acid O-phosphothioketal). UDP-N-acetyl-alpha-D-glucosamine-binding positions include 125–129 (RPIDL), D309, and V331.

This sequence belongs to the EPSP synthase family. MurA subfamily.

It localises to the cytoplasm. It catalyses the reaction phosphoenolpyruvate + UDP-N-acetyl-alpha-D-glucosamine = UDP-N-acetyl-3-O-(1-carboxyvinyl)-alpha-D-glucosamine + phosphate. The protein operates within cell wall biogenesis; peptidoglycan biosynthesis. In terms of biological role, cell wall formation. Adds enolpyruvyl to UDP-N-acetylglucosamine. The chain is UDP-N-acetylglucosamine 1-carboxyvinyltransferase 1 from Streptococcus pneumoniae (strain ATCC BAA-255 / R6).